Reading from the N-terminus, the 137-residue chain is Interferon-induced transmembrane protein 3 (137 aa).

The Cytoplasmic segment spans residues 1–57 (MNHTSQAFVNAATGGQPPNYERIKEEYEVSELGAPHGSASVRTTVINMPREVSVPDH). Residue Tyr20 is modified to Phosphotyrosine. Residue Lys24 forms a Glycyl lysine isopeptide (Lys-Gly) (interchain with G-Cter in ubiquitin) linkage. A Phosphotyrosine modification is found at Tyr27. An intramembrane region (helical) is located at residues 58-78 (VVWSLFNTLFMNFCCLGFIAY). The interval 60-93 (WSLFNTLFMNFCCLGFIAYAYSVKSRDRKMVGDM) is interaction with SPP1. 2 S-palmitoyl cysteine lipidation sites follow: Cys71 and Cys72. Topologically, residues 79–109 (AYSVKSRDRKMVGDMTGAQAYASTAKCLNIS) are cytoplasmic. Glycyl lysine isopeptide (Lys-Gly) (interchain with G-Cter in ubiquitin) cross-links involve residues Lys83, Lys88, and Lys104. Cys105 carries the S-palmitoyl cysteine lipid modification. Positions 108-133 (ISSLVLSILMVIITIVTVVIIALNAP) are interaction with VAPA. A helical transmembrane segment spans residues 110-130 (SLVLSILMVIITIVTVVIIAL). The Extracellular segment spans residues 131-137 (NAPRLQT).

This sequence belongs to the CD225/Dispanin family. Interacts with ATP6V0B. Interacts with CD81. Interacts with SPP1; the interaction reduces OPN expression. Interacts with BRI3. Post-translationally, polyubiquitinated with both 'Lys-48' and 'Lys-63' linkages. Ubiquitination negatively regulates antiviral activity. Lys-24 is the most prevalent ubiquitination site. Phosphorylation at Tyr-20 is required for endosomal and lysosomal location.

It localises to the cell membrane. The protein localises to the late endosome membrane. The protein resides in the early endosome membrane. Its subcellular location is the lysosome membrane. It is found in the cytoplasm. It localises to the perinuclear region. IFN-induced antiviral protein which disrupts intracellular cholesterol homeostasis. Inhibits the entry of viruses to the host cell cytoplasm by preventing viral fusion with cholesterol depleted endosomes. May inactivate new enveloped viruses which buds out of the infected cell, by letting them go out with a cholesterol depleted membrane. Active against multiple viruses. Plays a critical role in the structural stability and function of vacuolar ATPase (v-ATPase). Establishes physical contact with the v-ATPase of endosomes which is critical for proper clathrin localization and is also required for the function of the v-ATPase to lower the pH in phagocytic endosomes thus establishing an antiviral state. This chain is Interferon-induced transmembrane protein 3, found in Rattus norvegicus (Rat).